Here is a 507-residue protein sequence, read N- to C-terminus: Beta-glucosidase 12 (507 aa).

An N-terminal signal peptide occupies residues 1–22 (MRTIYLSLLVFIIVLALNEVMA). Glutamine 50 contacts a beta-D-glucoside. Asparagine 81 carries an N-linked (GlcNAc...) asparagine glycan. A beta-D-glucoside is bound by residues histidine 154 and 199–200 (NE). The Proton donor role is filled by glutamate 200. An intrachain disulfide couples cysteine 219 to cysteine 227. Residue asparagine 226 is glycosylated (N-linked (GlcNAc...) asparagine). Residue tyrosine 344 coordinates a beta-D-glucoside. Asparagine 358 carries N-linked (GlcNAc...) asparagine glycosylation. A beta-D-glucoside is bound by residues glutamate 414, tryptophan 459, 466–467 (EW), and phenylalanine 475. Glutamate 414 (nucleophile) is an active-site residue.

This sequence belongs to the glycosyl hydrolase 1 family.

It carries out the reaction Hydrolysis of terminal, non-reducing beta-D-glucosyl residues with release of beta-D-glucose.. This is Beta-glucosidase 12 from Arabidopsis thaliana (Mouse-ear cress).